The primary structure comprises 211 residues: Endoplasmic reticulum vesicle protein 25 (211 aa).

Residues 1–19 (MKSIVSVLTLLLLINAVAA) form the signal peptide. At 20 to 180 (LRFVLPAKDK…TNESTNRRVK (161 aa)) the chain is on the lumenal side. Residues 33–121 (PFCVRDFVKN…TKEIDLSVAI (89 aa)) form the GOLD domain. Residues 181-201 (FFSVGITLALIALGVWQIIYL) traverse the membrane as a helical segment. Topologically, residues 202 to 211 (RSYFRSKHII) are cytoplasmic.

The protein belongs to the EMP24/GP25L family.

It localises to the endoplasmic reticulum membrane. The protein localises to the golgi apparatus membrane. Constituent of COPII-coated endoplasmic reticulum-derived transport vesicles. Required for efficient transport of a subset of secretory proteins to the Golgi. Facilitates retrograde transport from the Golgi to the endoplasmic reticulum. This is Endoplasmic reticulum vesicle protein 25 (ERV25) from Yarrowia lipolytica (strain CLIB 122 / E 150) (Yeast).